Reading from the N-terminus, the 133-residue chain is Exonuclease VapC9 (133 aa).

One can recognise a PINc domain in the interval 5-113 (YLVDASALYA…LVLVTQDREL (109 aa)). Residues Asp8, Asp92, and Asp110 each contribute to the Mg(2+) site.

The protein belongs to the PINc/VapC protein family. Homodimer, 2 of which then form a homotetramer. Mg(2+) serves as cofactor.

Its activity is regulated as follows. Inhibited by EDTA. Functionally, toxic component of a type II toxin-antitoxin (TA) system. In terms of biological role, has ribonuclease activity. Has a slow ssDNA exonuclease activity. The chain is Exonuclease VapC9 from Pyrobaculum aerophilum (strain ATCC 51768 / DSM 7523 / JCM 9630 / CIP 104966 / NBRC 100827 / IM2).